Here is a 202-residue protein sequence, read N- to C-terminus: Thymidine kinase (202 aa).

Residues 16-23 and 99-102 each bind ATP; these read GPMFSGKS and DEVQ. The Proton acceptor role is filled by Glu100. 4 residues coordinate Zn(2+): Cys156, Cys159, Cys194, and His197.

It belongs to the thymidine kinase family. In terms of assembly, homotetramer.

The protein localises to the cytoplasm. The enzyme catalyses thymidine + ATP = dTMP + ADP + H(+). In Deinococcus deserti (strain DSM 17065 / CIP 109153 / LMG 22923 / VCD115), this protein is Thymidine kinase.